The primary structure comprises 234 residues: MAQLDTQKIISTIANSKKTTPVKVYLKGKLSELHFPKSVHAFIGKHTGTVIGDWAEIKPILKKAKLDDYYVETAGRNTGVPLLDIKAANARIEPGAIIRDQVLIGDNAVIMMGAIINIGAEIGAGTMIDMGAVLGGRAIVGKHCHIGAGTVLAGVVEPRSAKPVTIGDHVMIGANAVVLEGTTVGEGAVIAAGAVVINDVPAHTVVAGVPAKVIKQVNDQTEAKTVLLDELRKL.

It belongs to the transferase hexapeptide repeat family. DapH subfamily.

It carries out the reaction (S)-2,3,4,5-tetrahydrodipicolinate + acetyl-CoA + H2O = L-2-acetamido-6-oxoheptanedioate + CoA. The protein operates within amino-acid biosynthesis; L-lysine biosynthesis via DAP pathway; LL-2,6-diaminopimelate from (S)-tetrahydrodipicolinate (acetylase route): step 1/3. Its function is as follows. Catalyzes the transfer of an acetyl group from acetyl-CoA to tetrahydrodipicolinate. The polypeptide is 2,3,4,5-tetrahydropyridine-2,6-dicarboxylate N-acetyltransferase (Lacticaseibacillus paracasei (strain ATCC 334 / BCRC 17002 / CCUG 31169 / CIP 107868 / KCTC 3260 / NRRL B-441) (Lactobacillus paracasei)).